The primary structure comprises 229 residues: MNDTDVQKQIQQMVRFIRQEAEEKANEISVAAEEEFNIEKLQLVEAEKKKIRPEYERKEKQVQVRRKIEYSMQLNASRIKVLQAQDDLVNSMKEEAAKELLRVSGDHHHYKRLLKELVVQSLLRLREPGVLLRCREDDVHLVEHVLNSAKEEYAEKAEVHTPEIIVDSIHLPAGPSHHKEHGLHCSGGVVLASRDGKIVFENTLDARLEVAFRKKLPQIRKQLFAVAAA.

It belongs to the V-ATPase E subunit family. In terms of assembly, V-ATPase is a heteromultimeric enzyme composed of a peripheral catalytic V1 complex (components A to H) attached to an integral membrane V0 proton pore complex (components: a, c, c', c'' and d).

Functionally, subunit of the peripheral V1 complex of vacuolar ATPase essential for assembly or catalytic function. V-ATPase is responsible for acidifying a variety of intracellular compartments in eukaryotic cells. This chain is V-type proton ATPase subunit E (VATE), found in Spinacia oleracea (Spinach).